Here is a 99-residue protein sequence, read N- to C-terminus: Integration host factor subunit alpha (99 aa).

The protein belongs to the bacterial histone-like protein family. In terms of assembly, heterodimer of an alpha and a beta chain.

Functionally, this protein is one of the two subunits of integration host factor, a specific DNA-binding protein that functions in genetic recombination as well as in transcriptional and translational control. This Anaeromyxobacter sp. (strain Fw109-5) protein is Integration host factor subunit alpha.